Here is a 391-residue protein sequence, read N- to C-terminus: Multidrug resistance protein MdtL (391 aa).

A run of 12 helical transmembrane segments spans residues 4 to 24 (FLICSFALVLLYPAGIDMYLV), 42 to 62 (IAFSVYLAGMAAAMLFAGKVA), 69 to 89 (PVAIPGAALFIIASVFCSLAE), 93 to 113 (LFLAGRFLQGLGAGCCYVVAF), 131 to 151 (LLNGITCIIPVLAPVLGHLIM), 158 to 178 (SLFWAMATMGIAVLMLSLFIL), 203 to 222 (FFLSRVVITTLSVSVILTFV), 245 to 265 (ALTAGVSMTVSFSTPFALGIF), 269 to 289 (TLMITSQVLFLAAGITLAVSP), 293 to 313 (ISLFGITLICAGFSIGFGVAM), 324 to 346 (AGVASSTLGIAQVCGSSLWIWLA), and 363 to 383 (ACSIVSLLLIMFVTPGRPVAA).

The protein belongs to the major facilitator superfamily. DHA1 family. MdtL (TC 2.A.1.2.22) subfamily.

The protein resides in the cell inner membrane. In terms of biological role, confers resistance to chloramphenicol. This Escherichia fergusonii (strain ATCC 35469 / DSM 13698 / CCUG 18766 / IAM 14443 / JCM 21226 / LMG 7866 / NBRC 102419 / NCTC 12128 / CDC 0568-73) protein is Multidrug resistance protein MdtL.